Here is a 336-residue protein sequence, read N- to C-terminus: MYYPFVRKALFQLDPERAHEFTFQQLRRITGTPLEALVRQKVPTKPVTCMGLTFKNPLGLAAGLDKDGECIDALGAMGFGSLEIGTVTPRPQPGNDKPRLFRLVDAEGLINRMGFNNLGVDNLVENVKKAHFDGILGINIGKNKDTPVENGKDDYLICMEKVYAYAGYIAINISSPNTPGLRTLQYGDALDDLLIAIKNKQNDLQAIHHKYVPVAVKIAPDLCEEELIQVADSLLRHNIDGVIATNTTLDRSLVQGMKNCQQTGGLSGRPLQLKSTEIIRRLSQELNGQLPIIGVGGIDSVIAAREKIAAGATLVQIYSGFIFKGPPLIKEIVTHI.

FMN-binding positions include 62–66 and Thr-86; that span reads AGLDK. Lys-66 serves as a coordination point for substrate. 111-115 provides a ligand contact to substrate; it reads NRMGF. Residues Asn-139 and Asn-172 each coordinate FMN. Asn-172 is a substrate binding site. The active-site Nucleophile is Ser-175. Asn-177 provides a ligand contact to substrate. FMN-binding residues include Lys-217 and Thr-245. 246-247 is a binding site for substrate; sequence NT. FMN contacts are provided by residues Gly-268, Gly-297, and 318-319; that span reads YS.

The protein belongs to the dihydroorotate dehydrogenase family. Type 2 subfamily. In terms of assembly, monomer. FMN is required as a cofactor.

It is found in the cell membrane. It carries out the reaction (S)-dihydroorotate + a quinone = orotate + a quinol. It participates in pyrimidine metabolism; UMP biosynthesis via de novo pathway; orotate from (S)-dihydroorotate (quinone route): step 1/1. Its function is as follows. Catalyzes the conversion of dihydroorotate to orotate with quinone as electron acceptor. The chain is Dihydroorotate dehydrogenase (quinone) from Salmonella arizonae (strain ATCC BAA-731 / CDC346-86 / RSK2980).